A 1025-amino-acid polypeptide reads, in one-letter code: RNA cytidine acetyltransferase (1025 aa).

287–296 is an ATP binding site; sequence GRGKSAALGL. The residue at position 426 (Lys426) is an N6-acetyllysine. Arg470 contributes to the ATP binding site. The region spanning 558-753 is the N-acetyltransferase domain; that stretch reads CLLPPVPPTQ…HSCIMLKTLT (196 aa). Residues 629-631 and 636-642 contribute to the acetyl-CoA site; these read IAV and QGMGYGS. Residues 702–1025 are required for localization to the nucleolus and midbody; the sequence is PAERLDYLGV…KKDMKLKRKK (324 aa). The residue at position 716 (Thr716) is a Phosphothreonine. Arg725 is a binding site for acetyl-CoA. A phosphoserine mark is found at Ser934, Ser984, and Ser987. The disordered stretch occupies residues 990 to 1025; that stretch reads SDKKRKLEAKQEPKQSKKLKNRETKNKKDMKLKRKK. The span at 997-1018 shows a compositional bias: basic and acidic residues; the sequence is EAKQEPKQSKKLKNRETKNKKD.

The protein belongs to the RNA cytidine acetyltransferase family. NAT10 subfamily. As to quaternary structure, part of the small subunit (SSU) processome, composed of more than 70 proteins and the RNA chaperone small nucleolar RNA (snoRNA) U3. Interacts with THUMPD1. Interacts with SUN1 (via N-terminus). Interacts with TERT. Post-translationally, acetylation at Lys-426 is required to activation of rRNA transcription. May be autoacetylated; however ability to autoacetylate in vivo requires additional evidences.

Its subcellular location is the nucleus. The protein resides in the nucleolus. It is found in the midbody. The enzyme catalyses a cytidine in 18S rRNA + acetyl-CoA + ATP + H2O = an N(4)-acetylcytidine in 18S rRNA + ADP + phosphate + CoA + H(+). It catalyses the reaction a cytidine in tRNA + acetyl-CoA + ATP + H2O = an N(4)-acetylcytidine in tRNA + ADP + phosphate + CoA + H(+). The catalysed reaction is a cytidine in mRNA + acetyl-CoA + ATP + H2O = an N(4)-acetylcytidine in mRNA + ADP + phosphate + CoA + H(+). With respect to regulation, specifically inhibited by remodelin (4-[2-(2-cyclopentylidenehydrazinyl)-4-thiazolyl]-benzonitrile, monohydrobromide), a hydrobromide salt molecule. Remodelin can improve nuclear architecture, chromatin organization and fitness of cells from patients suffering from Hutchinson-Gilford progeria syndrome (HGPS); molecular mechanisms explaining the relation between NAT10 activity and nuclear architecture are however unclear. Functionally, RNA cytidine acetyltransferase that catalyzes the formation of N(4)-acetylcytidine (ac4C) modification on mRNAs, 18S rRNA and tRNAs. Catalyzes ac4C modification of a broad range of mRNAs, enhancing mRNA stability and translation. mRNA ac4C modification is frequently present within wobble cytidine sites and promotes translation efficiency. Mediates the formation of ac4C at position 1842 in 18S rRNA. May also catalyze the formation of ac4C at position 1337 in 18S rRNA. Required for early nucleolar cleavages of precursor rRNA at sites A0, A1 and A2 during 18S rRNA synthesis. Catalyzes the formation of ac4C in serine and leucine tRNAs. Requires the tRNA-binding adapter protein THUMPD1 for full tRNA acetyltransferase activity but not for 18S rRNA acetylation. In addition to RNA acetyltransferase activity, also able to acetylate lysine residues of proteins, such as histones, microtubules, p53/TP53 and MDM2, in vitro. The relevance of the protein lysine acetyltransferase activity is however unsure in vivo. Activates telomerase activity by stimulating the transcription of TERT, and may also regulate telomerase function by affecting the balance of telomerase subunit assembly, disassembly, and localization. Involved in the regulation of centrosome duplication by acetylating CENATAC during mitosis, promoting SASS6 proteasome degradation. Part of the small subunit (SSU) processome, first precursor of the small eukaryotic ribosomal subunit. During the assembly of the SSU processome in the nucleolus, many ribosome biogenesis factors, an RNA chaperone and ribosomal proteins associate with the nascent pre-rRNA and work in concert to generate RNA folding, modifications, rearrangements and cleavage as well as targeted degradation of pre-ribosomal RNA by the RNA exosome. This is RNA cytidine acetyltransferase from Homo sapiens (Human).